An 86-amino-acid polypeptide reads, in one-letter code: Small ribosomal subunit protein uS15c (86 aa).

The protein belongs to the universal ribosomal protein uS15 family. As to quaternary structure, part of the 30S ribosomal subunit.

It localises to the plastid. In Cuscuta gronovii (Common dodder), this protein is Small ribosomal subunit protein uS15c (rps15).